The chain runs to 678 residues: Methionine--tRNA ligase (678 aa).

Positions 18-28 (PYANGPIHLGH) match the 'HIGH' region motif. Zn(2+)-binding residues include cysteine 149, cysteine 152, cysteine 162, and cysteine 165. The 'KMSKS' region motif lies at 334–338 (KMSKS). Lysine 337 serves as a coordination point for ATP. The 102-residue stretch at 577–678 (DFAKVDLRVA…SGATPGMRVM (102 aa)) folds into the tRNA-binding domain.

The protein belongs to the class-I aminoacyl-tRNA synthetase family. MetG type 1 subfamily. As to quaternary structure, homodimer. It depends on Zn(2+) as a cofactor.

It is found in the cytoplasm. It carries out the reaction tRNA(Met) + L-methionine + ATP = L-methionyl-tRNA(Met) + AMP + diphosphate. In terms of biological role, is required not only for elongation of protein synthesis but also for the initiation of all mRNA translation through initiator tRNA(fMet) aminoacylation. This Marinobacter nauticus (strain ATCC 700491 / DSM 11845 / VT8) (Marinobacter aquaeolei) protein is Methionine--tRNA ligase.